A 32-amino-acid chain; its full sequence is Beta-hexosaminidase (32 aa).

The GH18 domain maps to 1–32 (GKSSSRPLGDATLGDLDFDIEVTQDYWDDLAR). The active-site Proton donor is the Glu21.

Belongs to the glycosyl hydrolase 18 family. Chitinase class II subfamily.

It catalyses the reaction Hydrolysis of terminal non-reducing N-acetyl-D-hexosamine residues in N-acetyl-beta-D-hexosaminides.. Its activity is regulated as follows. Activity is decreased by HgCl(2) and maltose. Activity is stimulated by Na(2)SeO(4), BaCl(2), MgCl(2), chondroitin 6-sulfate and phenylmethylsulfonyl fluoride. In terms of biological role, preferentially hydrolyzes pNP-GlcNAc, hydrolyzes pNP-GalNAc to a lesser extent. The polypeptide is Beta-hexosaminidase (Palythoa caribaeorum (White encrusting zoanthid coral)).